The chain runs to 207 residues: Ras-related protein Rab-8A (207 aa).

GTP-binding residues include Ser-17, Gly-18, Val-19, Gly-20, Lys-21, Thr-22, Cys-23, Ser-35, Ser-39, and Thr-40. Thr-22 is a Mg(2+) binding site. 2 short sequence motifs (switch) span residues 31-45 (DAFN…GIDF) and 63-80 (DTAG…YYRG). Mg(2+) contacts are provided by Thr-40 and Asp-63. Gly-66 contributes to the GTP binding site. A Phosphothreonine modification is found at Thr-72. GTP contacts are provided by Asn-121, Lys-122, Asp-124, Ala-152, and Lys-153. 2 positions are modified to phosphoserine: Ser-181 and Ser-185. Cysteine methyl ester is present on Cys-204. Cys-204 is lipidated: S-geranylgeranyl cysteine. The propeptide at 205-207 (VLL) is removed in mature form.

It belongs to the small GTPase superfamily. Rab family. In terms of assembly, interacts (GTP-bound form) with MICALL1; regulates RAB8A association with recycling endosomes. Interacts with MICALL2; competes with RAB13 and is involved in E-cadherin endocytic recycling. Interacts (GTP-bound form) with MICAL1, MICALCL, MICAL3, EHBP1 and EHBP1L1; at least in case of MICAL1, MICALCL, MICAL3 and EHBP1L1 two molecules of RAB8A can bind to one molecule of the effector protein; ternary complexes of RAB8A, RAB13 and either MICAL1 or EHBP1L1 are possible. Interacts with EHD1. Interacts with MAP4K2 and SYTL4. Interacts with SGSM1 and SGSM3. Interacts with RABIF, RIMS2, RPH3A and RPH3A. Interacts with OPTN. Interacts with RAB3IP, RAB3IP functions as guanine exchange factor (GEF). Interacts with MYO5B. Interacts with CIMAP3. Interacts with BIRC6/bruce. Interacts with OCRL. Interacts with AHI1. Interacts with DCDC1. Interacts with LRRK2; interaction facilitates phosphorylation of Thr-72. Interacts with RAB31P, GDI1, GDI2, CHM, CHML, RABGGTA, RABGGTB, TBC1D15 and INPP5B; these interactions are dependent on Thr-72 not being phosphorylated. Interacts with RILPL1 and RILPL2; these interactions are dependent on the phosphorylation of Thr-72 by LRRK2. Interacts with DZIP1; prevents inhibition by the GDP-dissociation inhibitor GDI2. Interacts (in GDP-bound form) with RAB3IP/Rabin8, RAB3IP functions as guanine exchange factor (GEF) towards RAB8A. Interacts (in GDP-bound form) with RPGR, RPGR functions as GEF towards RAB8A. Requires Mg(2+) as cofactor. In terms of processing, phosphorylation of Thr-72 in the switch II region by LRRK2 prevents the association of RAB regulatory proteins, including CHM, CHML and RAB GDP dissociation inhibitors GDI1 and GDI2. Phosphorylation by LRRK2 is required for localization to stressed lysosomes.

The protein resides in the cell membrane. It localises to the golgi apparatus. It is found in the endosome membrane. The protein localises to the recycling endosome membrane. Its subcellular location is the cell projection. The protein resides in the cilium. It localises to the cytoplasmic vesicle. It is found in the phagosome membrane. The protein localises to the cytoplasm. Its subcellular location is the cytoskeleton. The protein resides in the microtubule organizing center. It localises to the centrosome. It is found in the centriole. The protein localises to the cilium basal body. Its subcellular location is the midbody. The protein resides in the lysosome. The enzyme catalyses GTP + H2O = GDP + phosphate + H(+). Its activity is regulated as follows. Regulated by guanine nucleotide exchange factors (GEFs) such as RAB3IP/Rabin8 and RPGR which promote the exchange of bound GDP for free GTP, GTPase activating proteins (GAPs) which increase the GTP hydrolysis activity, and GDP dissociation inhibitors (GDIs) which inhibit the dissociation of the nucleotide from the GTPase. Activated in response to insulin. The small GTPases Rab are key regulators of intracellular membrane trafficking, from the formation of transport vesicles to their fusion with membranes. Rabs cycle between an inactive GDP-bound form and an active GTP-bound form that is able to recruit to membranes different sets of downstream effectors directly responsible for vesicle formation, movement, tethering and fusion. RAB8A is involved in polarized vesicular trafficking and neurotransmitter release. Together with RAB11A, RAB3IP, the exocyst complex, PARD3, PRKCI, ANXA2, CDC42 and DNMBP promotes transcytosis of PODXL to the apical membrane initiation sites (AMIS), apical surface formation and lumenogenesis. Regulates the compacted morphology of the Golgi. Together with MYO5B and RAB11A participates in epithelial cell polarization. Also involved in membrane trafficking to the cilium and ciliogenesis. Together with MICALL2, may also regulate adherens junction assembly. May play a role in insulin-induced transport to the plasma membrane of the glucose transporter GLUT4 and therefore play a role in glucose homeostasis. Involved in autophagy. Participates in the export of a subset of neosynthesized proteins through a Rab8-Rab10-Rab11-dependent endososomal export route. Targeted to and stabilized on stressed lysosomes through LRRK2 phosphorylation. Suppresses stress-induced lysosomal enlargement through EHBP1 and EHNP1L1 effector proteins. This chain is Ras-related protein Rab-8A (RAB8A), found in Canis lupus familiaris (Dog).